The primary structure comprises 78 residues: Small ribosomal subunit protein uS15 (78 aa).

This sequence belongs to the universal ribosomal protein uS15 family. Part of the 30S ribosomal subunit. Forms a bridge to the 50S subunit in the 70S ribosome, contacting the 23S rRNA.

Functionally, one of the primary rRNA binding proteins, it binds directly to 16S rRNA where it helps nucleate assembly of the platform of the 30S subunit by binding and bridging several RNA helices of the 16S rRNA. Forms an intersubunit bridge (bridge B4) with the 23S rRNA of the 50S subunit in the ribosome. The polypeptide is Small ribosomal subunit protein uS15 (Karelsulcia muelleri (strain GWSS) (Sulcia muelleri)).